A 218-amino-acid chain; its full sequence is Glutathione S-transferase Mu 2 (218 aa).

Positions 2 to 88 (PMTLGYWDIR…YLARKHNLCG (87 aa)) constitute a GST N-terminal domain. 7 to 8 (YW) contributes to the glutathione binding site. 2 positions are modified to phosphoserine: S27 and S44. Glutathione is bound by residues 43-46 (RSQW), K50, 59-60 (NL), and 72-73 (QS). The GST C-terminal domain maps to 90–208 (TEEERIRVDI…KSSRFLSKPI (119 aa)). Residue Y116 coordinates substrate. S117 bears the Phosphoserine mark.

Belongs to the GST superfamily. Mu family. In terms of assembly, homodimer.

It is found in the cytoplasm. It carries out the reaction RX + glutathione = an S-substituted glutathione + a halide anion + H(+). It catalyses the reaction 11(S)-hydroxy-14(S),15(S)-epoxy-(5Z,8Z,12E)-eicosatrienoate + glutathione = (11S,15S)-dihydroxy-14(R)-S-glutathionyl-(5Z,8Z,12E)-eicosatrienoate. Functionally, conjugation of reduced glutathione to a wide number of exogenous and endogenous hydrophobic electrophiles. Participates in the formation of novel hepoxilin regioisomers. This chain is Glutathione S-transferase Mu 2, found in Mus musculus (Mouse).